The sequence spans 314 residues: NF-kappa-B inhibitor alpha (314 aa).

Positions 1–39 are disordered; that stretch reads MFQPAGHGQDWAMEGPRDGLKKERLVDDRHDSGLDSMKD. Positions 15-39 are enriched in basic and acidic residues; it reads GPRDGLKKERLVDDRHDSGLDSMKD. Lys-21 participates in a covalent cross-link: Glycyl lysine isopeptide (Lys-Gly) (interchain with G-Cter in SUMO); alternate. Residue Lys-21 forms a Glycyl lysine isopeptide (Lys-Gly) (interchain with G-Cter in ubiquitin); alternate linkage. A Glycyl lysine isopeptide (Lys-Gly) (interchain with G-Cter in ubiquitin) cross-link involves residue Lys-22. Positions 30–36 match the Destruction motif motif; that stretch reads HDSGLDS. At Ser-32 the chain carries Phosphoserine; by IKKA and IKKB. Phosphoserine; by IKKA, IKKB, IKKE and TBK1 is present on Ser-36. Tyr-42 bears the Phosphotyrosine; by Tyr-kinases mark. The Nuclear export signal signature appears at 45–54; the sequence is MVKELREIRL. The Nuclear import signal motif lies at 110–120; it reads LQQTPLHLAVI. 4 ANK repeats span residues 110-139, 143-172, 182-211, and 216-245; these read LQQT…DPEL, RGNT…PQHL, NGHT…DVNA, and NGRT…DVNR. (3S)-3-hydroxyasparagine; by HIF1AN is present on residues Asn-210 and Asn-244. A phosphoserine; by CK2 mark is found at Ser-283 and Ser-288. Thr-291 bears the Phosphothreonine; by CK2 mark. Ser-293 is subject to Phosphoserine; by CK2. Thr-296 is subject to Phosphothreonine.

This sequence belongs to the NF-kappa-B inhibitor family. As to quaternary structure, interacts with RELA; the interaction requires the nuclear import signal. Part of a 70-90 kDa complex at least consisting of CHUK, IKBKB, NFKBIA, RELA, ELP1 and MAP3K14. Interacts with NKIRAS1 and NKIRAS2. Interacts with RWDD3; the interaction enhances sumoylation. Interacts with PRMT2. Interacts with PRKACA in platelets; this interaction is disrupted by thrombin and collagen. Interacts with MEFV. Interacts with DDRGK1; positively regulates NFKBIA phosphorylation and degradation. Interacts with HNRNPA2B1; the interaction may be mediated by the RRM2 domain of HNRNPA2B1, and HNRNPA2B1 may interact simultaneously with FAM76B and either NFKBIA or NFKBIE to form a complex. In terms of processing, phosphorylated at Ser-32 and Ser-36 by IKKA/CHUK and IKKB/IKBKB; disables inhibition of NF-kappa-B DNA-binding activity. Phosphorylation at positions 32 and 36 is prerequisite to recognition by the SCF(FBXW11) and SCF(BTRC) complexes, leading to polyubiquitination and subsequent degradation. Post-translationally, polyubiquitinated at Lys-21 and/or Lys-22 following phosphorylation at Ser-32 and Ser-36. Monoubiquitinated at Lys-21 and/or Lys-22 by UBE2D3. Ubiquitin chain elongation is then performed by CDC34 in cooperation with the SCF(FBXW11) E3 ligase complex, building ubiquitin chains from the UBE2D3-primed NFKBIA-linked ubiquitin. The resulting polyubiquitination leads to protein degradation. Also ubiquitinated by the SCF(BTRC) complex following stimulus-dependent phosphorylation at Ser-32 and Ser-36. Deubiquitinated by USP38, leading to NF-kappa-B inhibition. Sumoylated; sumoylation requires the presence of the nuclear import signal. Sumoylation blocks ubiquitination and proteasome-mediated degradation of the protein thereby increasing the protein stability. In terms of processing, hydroxylated by HIF1AN.

The protein localises to the cytoplasm. Its subcellular location is the nucleus. Its function is as follows. Inhibits the activity of dimeric NF-kappa-B/REL complexes by trapping REL (RELA/p65 and NFKB1/p50) dimers in the cytoplasm by masking their nuclear localization signals. On cellular stimulation by immune and pro-inflammatory responses, becomes phosphorylated promoting ubiquitination and degradation, enabling the dimeric RELA to translocate to the nucleus and activate transcription. In Rattus norvegicus (Rat), this protein is NF-kappa-B inhibitor alpha (Nfkbia).